The following is a 652-amino-acid chain: ATP-dependent zinc metalloprotease FtsH (652 aa).

Residues 1-11 are Cytoplasmic-facing; it reads MKKQNNGLIKN. A helical membrane pass occupies residues 12–32; it reads PFLWLLFIFFLVTGFQYFYSG. Residues 33 to 131 lie on the Extracellular side of the membrane; it reads NNSGGSQQIN…EVTVKHESSS (99 aa). Residues 132–152 form a helical membrane-spanning segment; the sequence is GIWINLLVSIVPFGILFFFLF. The Cytoplasmic portion of the chain corresponds to 153-652; sequence SMMGNMGGGN…EVKSKMNDEK (500 aa). 227-234 lines the ATP pocket; sequence GPPGTGKT. Zn(2+) is bound at residue His449. Residue Glu450 is part of the active site. Residues His453 and Asp525 each contribute to the Zn(2+) site. The tract at residues 628-652 is disordered; the sequence is MPEAVEEESHALSYDEVKSKMNDEK. The segment covering 634–652 has biased composition (basic and acidic residues); sequence EESHALSYDEVKSKMNDEK.

In the central section; belongs to the AAA ATPase family. It in the C-terminal section; belongs to the peptidase M41 family. As to quaternary structure, homohexamer. The cofactor is Zn(2+).

The protein resides in the cell membrane. In terms of biological role, acts as a processive, ATP-dependent zinc metallopeptidase for both cytoplasmic and membrane proteins. Plays a role in the quality control of integral membrane proteins. The protein is ATP-dependent zinc metalloprotease FtsH of Streptococcus pneumoniae serotype 4 (strain ATCC BAA-334 / TIGR4).